Here is a 663-residue protein sequence, read N- to C-terminus: COBRA-like protein 9 (663 aa).

An N-terminal signal peptide occupies residues 1–23; that stretch reads MGVLLPIFFGVLLLFTVTPPSMS. N-linked (GlcNAc...) asparagine glycans are attached at residues asparagine 63, asparagine 111, asparagine 121, asparagine 169, asparagine 203, asparagine 326, asparagine 355, asparagine 397, asparagine 409, asparagine 429, asparagine 470, asparagine 550, and asparagine 561. Serine 638 is lipidated: GPI-anchor amidated serine. Positions 639–663 are cleaved as a propeptide — removed in mature form; sequence GGRRNGAITVLSFITFYVAAFMVLL.

It belongs to the COBRA family. Expressed only in flowers.

It is found in the cell membrane. This Arabidopsis thaliana (Mouse-ear cress) protein is COBRA-like protein 9 (COBL9).